Consider the following 126-residue polypeptide: Aspartate 1-decarboxylase (126 aa).

The active-site Schiff-base intermediate with substrate; via pyruvic acid is Ser25. Ser25 carries the post-translational modification Pyruvic acid (Ser). Thr57 serves as a coordination point for substrate. Tyr58 functions as the Proton donor in the catalytic mechanism. 73–75 contributes to the substrate binding site; that stretch reads GAA.

This sequence belongs to the PanD family. As to quaternary structure, heterooctamer of four alpha and four beta subunits. Requires pyruvate as cofactor. Is synthesized initially as an inactive proenzyme, which is activated by self-cleavage at a specific serine bond to produce a beta-subunit with a hydroxyl group at its C-terminus and an alpha-subunit with a pyruvoyl group at its N-terminus.

The protein resides in the cytoplasm. The enzyme catalyses L-aspartate + H(+) = beta-alanine + CO2. It functions in the pathway cofactor biosynthesis; (R)-pantothenate biosynthesis; beta-alanine from L-aspartate: step 1/1. Its function is as follows. Catalyzes the pyruvoyl-dependent decarboxylation of aspartate to produce beta-alanine. The polypeptide is Aspartate 1-decarboxylase (Yersinia pestis bv. Antiqua (strain Antiqua)).